Consider the following 67-residue polypeptide: Small ribosomal subunit protein eS31 (67 aa).

Residues C31, C34, C49, and C52 each contribute to the Zn(2+) site. The C4-type zinc-finger motif lies at 31 to 52; it reads CPKCGAGVFMAEHLNRFACGKC.

It belongs to the eukaryotic ribosomal protein eS31 family. As to quaternary structure, part of the 30S ribosomal subunit. The cofactor is Zn(2+).

The chain is Small ribosomal subunit protein eS31 from Methanococcus maripaludis (strain DSM 14266 / JCM 13030 / NBRC 101832 / S2 / LL).